A 436-amino-acid polypeptide reads, in one-letter code: Ribulose bisphosphate carboxylase large chain (436 aa).

Residues asparagine 104 and threonine 154 each contribute to the substrate site. Lysine 156 acts as the Proton acceptor in catalysis. A substrate-binding site is contributed by lysine 158. Mg(2+) is bound by residues lysine 182, aspartate 184, and glutamate 185. An N6-carboxylysine modification is found at lysine 182. Catalysis depends on histidine 275, which acts as the Proton acceptor. Substrate contacts are provided by arginine 276, histidine 308, and serine 360.

It belongs to the RuBisCO large chain family. Type I subfamily. As to quaternary structure, heterohexadecamer of 8 large chains and 8 small chains. Mg(2+) serves as cofactor.

The protein resides in the plastid. It localises to the chloroplast. The catalysed reaction is 2 (2R)-3-phosphoglycerate + 2 H(+) = D-ribulose 1,5-bisphosphate + CO2 + H2O. The enzyme catalyses D-ribulose 1,5-bisphosphate + O2 = 2-phosphoglycolate + (2R)-3-phosphoglycerate + 2 H(+). Functionally, ruBisCO catalyzes two reactions: the carboxylation of D-ribulose 1,5-bisphosphate, the primary event in carbon dioxide fixation, as well as the oxidative fragmentation of the pentose substrate in the photorespiration process. Both reactions occur simultaneously and in competition at the same active site. This chain is Ribulose bisphosphate carboxylase large chain, found in Euglena myxocylindracea.